Consider the following 184-residue polypeptide: UPF0316 protein BLi00691/BL01474 (184 aa).

The next 3 membrane-spanning stretches (helical) occupy residues G9 to L29, L41 to L61, and I67 to I87.

It belongs to the UPF0316 family.

It localises to the cell membrane. This Bacillus licheniformis (strain ATCC 14580 / DSM 13 / JCM 2505 / CCUG 7422 / NBRC 12200 / NCIMB 9375 / NCTC 10341 / NRRL NRS-1264 / Gibson 46) protein is UPF0316 protein BLi00691/BL01474.